Reading from the N-terminus, the 431-residue chain is Galanin-like G-protein coupled receptor npr-9 (431 aa).

The Extracellular segment spans residues 1–34 (MEFENLTKEEMEQLQKIYDDTISFERKIGIIIPT). Residue Asn5 is glycosylated (N-linked (GlcNAc...) asparagine). A helical membrane pass occupies residues 35-55 (IFAVIILVGLVGNALVVIVAF). Topologically, residues 56 to 66 (GRQMRNSTNTL) are cytoplasmic. Residues 67 to 87 (IIGLAISDLMFLLLCVPFTAV) form a helical membrane-spanning segment. Residues 88–101 (DYAAPTWIFPEWTC) are Extracellular-facing. Cysteines 101 and 182 form a disulfide. A helical transmembrane segment spans residues 102-124 (SMINFFQHTSAYCSVWTLTLMAL). Over 125-143 (DRYLAVVYPVESMTLRTPR) the chain is Cytoplasmic. The chain crosses the membrane as a helical span at residues 144 to 164 (NTVIALCFIYIIIIASQIPVG). Topologically, residues 165 to 203 (RMHGIYVYDFIMEKRSTCAILTIATAEATPTMARTYFMT) are extracellular. Residues 204 to 224 (FNVFGYVLPLGISVVLYGLML) traverse the membrane as a helical segment. At 225–268 (RKLWDMPRPGNSQSVGGRNLTNRDSGSSIRRRPEATAAKRKVTR) the chain is on the cytoplasmic side. Polar residues predominate over residues 235–252 (NSQSVGGRNLTNRDSGSS). Positions 235 to 257 (NSQSVGGRNLTNRDSGSSIRRRP) are disordered. A helical membrane pass occupies residues 269–289 (LVLCVLITWALCWLPLNVCFF). Residues 290–298 (MSGLAYPEP) are Extracellular-facing. Residues 299–319 (LVISHGVIMVIVQIASQVLAY) form a helical membrane-spanning segment. The Cytoplasmic portion of the chain corresponds to 320–431 (TNSCLNPILY…RSKSTRSYNL (112 aa)). The span at 393–414 (SLLKDNSSSATSVQPLRTSIQA) shows a compositional bias: polar residues. A disordered region spans residues 393–431 (SLLKDNSSSATSVQPLRTSIQAKKTKNIGRSKSTRSYNL). The segment covering 415-425 (KKTKNIGRSKS) has biased composition (basic residues).

It belongs to the G-protein coupled receptor 1 family. Exclusively expressed in the AIB interneuron.

It is found in the cell membrane. Its function is as follows. Neuropeptide that controls movement such as roaming, foraging and backwards locomotion or 'reversals' in response to environmental cues such as food availability or volatile odorants such as octanol. Antagonizes AIB interneuron activity to control bacterial colonization and may negatively regulate the expression of immunity-related genes such as pqm-1 and dod-22 in response to infection by P.aeruginosa. The polypeptide is Galanin-like G-protein coupled receptor npr-9 (Caenorhabditis elegans).